A 719-amino-acid chain; its full sequence is Fatty acid oxidation complex subunit alpha (719 aa).

An enoyl-CoA hydratase/isomerase region spans residues 1-190 (MIYQGNRITV…KLGLVDAVVA (190 aa)). Residue Asp298 participates in substrate binding. The 3-hydroxyacyl-CoA dehydrogenase stretch occupies residues 313–719 (HDINEAAVLG…AAGETFYPKA (407 aa)). Residues Met326, Asp345, 402–404 (VVE), Lys409, and Ser431 each bind NAD(+). Catalysis depends on His452, which acts as the For 3-hydroxyacyl-CoA dehydrogenase activity. Residue Asn455 coordinates NAD(+). Asn502 is a substrate binding site.

The protein in the N-terminal section; belongs to the enoyl-CoA hydratase/isomerase family. It in the C-terminal section; belongs to the 3-hydroxyacyl-CoA dehydrogenase family. As to quaternary structure, heterotetramer of two alpha chains (FadB) and two beta chains (FadA).

The catalysed reaction is a (3S)-3-hydroxyacyl-CoA + NAD(+) = a 3-oxoacyl-CoA + NADH + H(+). It carries out the reaction a (3S)-3-hydroxyacyl-CoA = a (2E)-enoyl-CoA + H2O. It catalyses the reaction a 4-saturated-(3S)-3-hydroxyacyl-CoA = a (3E)-enoyl-CoA + H2O. The enzyme catalyses (3S)-3-hydroxybutanoyl-CoA = (3R)-3-hydroxybutanoyl-CoA. The catalysed reaction is a (3Z)-enoyl-CoA = a 4-saturated (2E)-enoyl-CoA. It carries out the reaction a (3E)-enoyl-CoA = a 4-saturated (2E)-enoyl-CoA. It functions in the pathway lipid metabolism; fatty acid beta-oxidation. In terms of biological role, involved in the aerobic and anaerobic degradation of long-chain fatty acids via beta-oxidation cycle. Catalyzes the formation of 3-oxoacyl-CoA from enoyl-CoA via L-3-hydroxyacyl-CoA. It can also use D-3-hydroxyacyl-CoA and cis-3-enoyl-CoA as substrate. The chain is Fatty acid oxidation complex subunit alpha from Psychrobacter sp. (strain PRwf-1).